The sequence spans 84 residues: Putative antitoxin VapB37 (84 aa).

Probable antitoxin component of a type II toxin-antitoxin (TA) system. Its putative cognate toxin is VapC37. This chain is Putative antitoxin VapB37 (vapB37), found in Mycobacterium tuberculosis (strain CDC 1551 / Oshkosh).